The following is a 737-amino-acid chain: Catalase-peroxidase (737 aa).

The disordered stretch occupies residues 1–33 (MPEATEHPPIGEAQTEPAQSGCPMVIKPPVEGG). Positions 107–235 (WHAAGTYRVQ…LGASHMGLIY (129 aa)) form a cross-link, tryptophyl-tyrosyl-methioninium (Trp-Tyr) (with M-261). H108 functions as the Proton acceptor in the catalytic mechanism. The tryptophyl-tyrosyl-methioninium (Tyr-Met) (with W-107) cross-link spans 235 to 261 (YVNPEGPEGNPDPIAAAIDIRETFGRM). H276 contacts heme.

It belongs to the peroxidase family. Peroxidase/catalase subfamily. As to quaternary structure, homodimer or homotetramer. It depends on heme b as a cofactor. Formation of the three residue Trp-Tyr-Met cross-link is important for the catalase, but not the peroxidase activity of the enzyme.

The catalysed reaction is H2O2 + AH2 = A + 2 H2O. It carries out the reaction 2 H2O2 = O2 + 2 H2O. Its function is as follows. Bifunctional enzyme with both catalase and broad-spectrum peroxidase activity. May play a role in polycyclic aromatic hydrocarbon (PAH) metabolism. The sequence is that of Catalase-peroxidase from Mycolicibacterium vanbaalenii (Mycobacterium vanbaalenii).